Here is a 382-residue protein sequence, read N- to C-terminus: Pyrimidine monooxygenase RutA (382 aa).

Residues 68-69 (IK), N134, E143, 159-160 (RY), and S209 contribute to the FMN site.

The protein belongs to the NtaA/SnaA/DszA monooxygenase family. RutA subfamily.

It catalyses the reaction uracil + FMNH2 + NADH + O2 = (Z)-3-ureidoacrylate + FMN + NAD(+) + H2O + H(+). The enzyme catalyses thymine + FMNH2 + NADH + O2 = (Z)-2-methylureidoacrylate + FMN + NAD(+) + H2O + H(+). Its function is as follows. Catalyzes the pyrimidine ring opening between N-3 and C-4 by an unusual flavin hydroperoxide-catalyzed mechanism, adding oxygen atoms in the process to yield ureidoacrylate peracid, that immediately reacts with FMN forming ureidoacrylate and FMN-N(5)-oxide. The FMN-N(5)-oxide reacts spontaneously with NADH to produce FMN. Requires the flavin reductase RutF to regenerate FMN in vivo. The sequence is that of Pyrimidine monooxygenase RutA from Shigella flexneri serotype X (strain 2002017).